We begin with the raw amino-acid sequence, 220 residues long: MKLNKYIDHTLLKPEATKEQIEKVIEEAKEYDFASVCVNPTWVKLAAEGLSGSDVKVCTVIGFPLGATTPEVKAFETKNAIENGADEIDMVINIGALKSGNLDLLERDIQAVVEASGEKLVKVIIETCLLTDQEKVLACQVSQKAGADFVKTSTGFSTGGATVEDVALMRQTVGPDMGVKASGGARSYDDAQAFIKAGATRIGASSGVAIMKGETASGNY.

Catalysis depends on Asp89, which acts as the Proton donor/acceptor. The active-site Schiff-base intermediate with acetaldehyde is the Lys151. The active-site Proton donor/acceptor is the Lys180.

This sequence belongs to the DeoC/FbaB aldolase family. DeoC type 1 subfamily.

Its subcellular location is the cytoplasm. The enzyme catalyses 2-deoxy-D-ribose 5-phosphate = D-glyceraldehyde 3-phosphate + acetaldehyde. It functions in the pathway carbohydrate degradation; 2-deoxy-D-ribose 1-phosphate degradation; D-glyceraldehyde 3-phosphate and acetaldehyde from 2-deoxy-alpha-D-ribose 1-phosphate: step 2/2. Functionally, catalyzes a reversible aldol reaction between acetaldehyde and D-glyceraldehyde 3-phosphate to generate 2-deoxy-D-ribose 5-phosphate. The chain is Deoxyribose-phosphate aldolase from Streptococcus gordonii (strain Challis / ATCC 35105 / BCRC 15272 / CH1 / DL1 / V288).